We begin with the raw amino-acid sequence, 306 residues long: Ectoine dioxygenase (306 aa).

Residue glutamine 127 participates in L-ectoine binding. Lysine 133 contributes to the 2-oxoglutarate binding site. Fe cation is bound by residues histidine 144, aspartate 146, and histidine 245.

It belongs to the PhyH family. EctD subfamily. As to quaternary structure, homodimer. The cofactor is Fe(2+).

It carries out the reaction L-ectoine + 2-oxoglutarate + O2 = 5-hydroxyectoine + succinate + CO2. Its function is as follows. Involved in the biosynthesis of 5-hydroxyectoine, called compatible solute, which helps organisms to survive extreme osmotic stress by acting as a highly soluble organic osmolyte. Catalyzes the 2-oxoglutarate-dependent selective hydroxylation of L-ectoine to yield (4S,5S)-5-hydroxyectoine. In Sphingopyxis alaskensis (strain DSM 13593 / LMG 18877 / RB2256) (Sphingomonas alaskensis), this protein is Ectoine dioxygenase.